A 370-amino-acid polypeptide reads, in one-letter code: Glutamate 5-kinase (370 aa).

Lys17 serves as a coordination point for ATP. Substrate-binding residues include Ser57, Asp144, and Asn156. ATP contacts are provided by residues 176 to 177 (SD) and 220 to 226 (TGGMASK). In terms of domain architecture, PUA spans 282-360 (AGALTLDDGA…HELPVEMRRP (79 aa)).

It belongs to the glutamate 5-kinase family.

Its subcellular location is the cytoplasm. It catalyses the reaction L-glutamate + ATP = L-glutamyl 5-phosphate + ADP. Its pathway is amino-acid biosynthesis; L-proline biosynthesis; L-glutamate 5-semialdehyde from L-glutamate: step 1/2. Its function is as follows. Catalyzes the transfer of a phosphate group to glutamate to form L-glutamate 5-phosphate. In Mycolicibacterium smegmatis (strain ATCC 700084 / mc(2)155) (Mycobacterium smegmatis), this protein is Glutamate 5-kinase.